A 349-amino-acid polypeptide reads, in one-letter code: Xylitol-binding protein (349 aa).

A signal peptide spans 1–22 (MNITSKIGAIAAAGAVGLGLTA). Cysteine 23 carries the N-palmitoyl cysteine lipid modification. Cysteine 23 carries S-diacylglycerol cysteine lipidation. Xylitol-binding residues include tyrosine 42, asparagine 121, arginine 173, asparagine 224, aspartate 249, and glutamine 269.

This sequence belongs to the bacterial solute-binding protein 2 family.

It is found in the cell membrane. In terms of biological role, part of an ABC transporter complex likely involved in xylitol import. Binds xylitol. This chain is Xylitol-binding protein, found in Mycolicibacterium smegmatis (strain ATCC 700084 / mc(2)155) (Mycobacterium smegmatis).